A 340-amino-acid chain; its full sequence is Heat-inducible transcription repressor HrcA (340 aa).

Belongs to the HrcA family.

Its function is as follows. Negative regulator of class I heat shock genes (grpE-dnaK-dnaJ and groELS operons). Prevents heat-shock induction of these operons. The chain is Heat-inducible transcription repressor HrcA from Mycoplasma capricolum subsp. capricolum (strain California kid / ATCC 27343 / NCTC 10154).